The primary structure comprises 193 residues: p53 apoptosis effector related to PMP-22 (193 aa).

The next 4 helical transmembrane spans lie at 12 to 32 (RWILPLLLLSAIAFDIIALAG), 81 to 101 (LFCGFIILCICFILSFFALCG), 110 to 130 (VIGGLLALAAIFQIISLVIYP), and 151 to 171 (WAYGFGWAATIILIGCSFFFC).

The protein belongs to the TMEM47 family. Expressed in the stratified squamous skin epithelium of the skin and the tongue, but not in simple epithelia (at protein level). Expressed in the oral epithelium, tongue epithelium and skin (at protein level). More abundant in areas of lower flow stress in the inner curvature compared to the outer curvature regions of the aorta (at protein level). Expressed in luminal cells and myoepithelium cells of the mammary epithelium (at protein level). Expression increases during the early stages of pregnancy before decreasing before birth, expression continues to be weak during involution which mirrors decreased desmosome abundance and organization at these time points (at protein level). Expressed by epithelial cells at the mucosal surface in the proximal colon (at protein level). Expressed in apoptotic cells.

It localises to the cell junction. It is found in the desmosome. The protein resides in the cell membrane. Its subcellular location is the cytoplasm. Functionally, component of intercellular desmosome junctions. Plays a role in stratified epithelial integrity and cell-cell adhesion by promoting desmosome assembly. Thereby plays a role in barrier function of the skin against infection. Plays a role in mammary epithelial tissue homeostasis and remodeling during and after pregnancy, potentially via its involvement in desmosome cell-cell junctions. Required for tooth enamel development via facilitating desmosome-mediated ameloblast adhesion to the stratum intermedium during the transitional stage of amelogenesis. May also play a role in downstream transcriptional regulation of other genes involved in amelogenesis such as AMBN, ENAM, MMP20 and KLK4. Plays a role as an effector in the TP53-dependent apoptotic pathway. Positively regulates apoptosis in T-helper 17 (Th17) cell populations via caspase-dependent signaling. Promotes neutrophil transepithelial migration in response to chemoattractants such as hepoxilin A3 (HXA3), N-Formylmethionyl-leucyl-phenylalanine (fMLP) and CXCL8/IL-8. May act as a positive regulator of endothelial cell apoptosis in response to blood flow-derived shear stress. This is p53 apoptosis effector related to PMP-22 from Mus musculus (Mouse).